A 306-amino-acid polypeptide reads, in one-letter code: Beta-lactamase 1 (306 aa).

Positions 1–43 are cleaved as a signal peptide; the sequence is MKNKKMLKIGMCVGILGLSITSLVTFTGGALQVEAKEKTGQVK. Residue serine 89 is the Acyl-ester intermediate of the active site. Residue glutamate 185 is the Proton acceptor of the active site. Substrate is bound at residue 251–253; it reads KSG.

The protein belongs to the class-A beta-lactamase family.

The protein resides in the secreted. The catalysed reaction is a beta-lactam + H2O = a substituted beta-amino acid. Acts preferentially on penicillins. In Bacillus cereus, this protein is Beta-lactamase 1 (penPC).